Consider the following 266-residue polypeptide: Mitochondrial import inner membrane translocase subunit Tim29 (266 aa).

The N-terminal 37 residues, Met1–Leu37, are a transit peptide targeting the mitochondrion. Residues Ser38 to Arg65 are Mitochondrial matrix-facing. The helical transmembrane segment at Ala66–Ala83 threads the bilayer. Over Pro84–Arg266 the chain is Mitochondrial intermembrane.

In terms of assembly, component of the TIM22 complex, which core is composed of TIMM22, associated with TIMM10 (TIMM10A and/or TIMM10B), TIMM9, AGK and TIMM29. Interacts with TIMM10B; the interaction is direct. Interacts with TOMM40; linking the TIM22 complex to the TOM complex. Interacts with TIMM22 (when oxidized); the interaction is direct.

The protein resides in the mitochondrion inner membrane. In terms of biological role, component of the TIM22 complex, a complex that mediates the import and insertion of multi-pass transmembrane proteins into the mitochondrial inner membrane. The TIM22 complex forms a twin-pore translocase that uses the membrane potential as the external driving force. Required for the stability of the TIM22 complex and functions in the assembly of the TIMM22 protein into the TIM22 complex. May facilitate cooperation between TIM22 and TOM complexes by interacting with TOMM40. The chain is Mitochondrial import inner membrane translocase subunit Tim29 (Timm29) from Mus musculus (Mouse).